A 338-amino-acid chain; its full sequence is Phosphate acyltransferase (338 aa).

It belongs to the PlsX family. Homodimer. Probably interacts with PlsY.

It is found in the cytoplasm. It catalyses the reaction a fatty acyl-[ACP] + phosphate = an acyl phosphate + holo-[ACP]. The protein operates within lipid metabolism; phospholipid metabolism. Catalyzes the reversible formation of acyl-phosphate (acyl-PO(4)) from acyl-[acyl-carrier-protein] (acyl-ACP). This enzyme utilizes acyl-ACP as fatty acyl donor, but not acyl-CoA. This Salinibacter ruber (strain DSM 13855 / M31) protein is Phosphate acyltransferase.